The primary structure comprises 231 residues: MSQSTNQIIAIVPAAGIGSRMGAEVPKQYLALNEQTILGHTLDCLLNHPQIAQVIVALNPEDKHFCLLPQAQHKKLLTVTGGNERADSVLAALQQADENSWVLVHDAARPCLSHLDIDKLIASTSTFPQGAILGAPVRDTMKRTGEHGEISNTVCRDRLWHALTPQYFQAKQLKVNLRAALAAGAKVTDEASAMEWAGVMPGIVSGRADNIKVTHPDDLQLASLFLKNLGR.

Belongs to the IspD/TarI cytidylyltransferase family. IspD subfamily.

The enzyme catalyses 2-C-methyl-D-erythritol 4-phosphate + CTP + H(+) = 4-CDP-2-C-methyl-D-erythritol + diphosphate. Its pathway is isoprenoid biosynthesis; isopentenyl diphosphate biosynthesis via DXP pathway; isopentenyl diphosphate from 1-deoxy-D-xylulose 5-phosphate: step 2/6. Its function is as follows. Catalyzes the formation of 4-diphosphocytidyl-2-C-methyl-D-erythritol from CTP and 2-C-methyl-D-erythritol 4-phosphate (MEP). The sequence is that of 2-C-methyl-D-erythritol 4-phosphate cytidylyltransferase from Shewanella piezotolerans (strain WP3 / JCM 13877).